Here is a 39-residue protein sequence, read N- to C-terminus: Photosystem II reaction center protein J (39 aa).

The helical transmembrane segment at 7 to 27 threads the bilayer; it reads IPLWIVAVVAGMGVIAVVGIF.

This sequence belongs to the PsbJ family. As to quaternary structure, PSII is composed of 1 copy each of membrane proteins PsbA, PsbB, PsbC, PsbD, PsbE, PsbF, PsbH, PsbI, PsbJ, PsbK, PsbL, PsbM, PsbT, PsbX, PsbY, PsbZ, Psb30/Ycf12, peripheral proteins PsbO, CyanoQ (PsbQ), PsbU, PsbV and a large number of cofactors. It forms dimeric complexes.

The protein resides in the cellular thylakoid membrane. In terms of biological role, this protein is a component of the reaction center of photosystem II. Functionally, one of the components of the core complex of photosystem II (PSII). PSII is a light-driven water:plastoquinone oxidoreductase that uses light energy to abstract electrons from H(2)O, generating O(2) and a proton gradient subsequently used for ATP formation. It consists of a core antenna complex that captures photons, and an electron transfer chain that converts photonic excitation into a charge separation. This is Photosystem II reaction center protein J from Picosynechococcus sp. (strain ATCC 27264 / PCC 7002 / PR-6) (Agmenellum quadruplicatum).